Here is an 80-residue protein sequence, read N- to C-terminus: Protein transport protein SSS1 (80 aa).

Over 1–46 (MARASEKGEEKKQSNNQVEKLVEAPVEFVREGTQFLAKCKKPDLKE) the chain is Cytoplasmic. Residues 47 to 75 (YTKIVKAVGIGFIAVGIIGYAIKLIHIPI) traverse the membrane as a helical segment. Topologically, residues 76-80 (RYVIV) are extracellular.

It belongs to the SecE/SEC61-gamma family. In terms of assembly, component of the heterotrimeric Sec61 complex, which is composed of SSH1, SBH1 and SSS1. Presumably three to four Sec61 heterotrimers assemble into an oligomeric ring with a central aqueous pore. In cotranslational ER import, the pore diameter varies from 9-15 A in a ribosome-free resting state to 40-60 A in a functional state when associated with the ribosome. The Sec61 complex is part of a channel-forming translocon complex whose composition seem to change dependent upon different functional states. During post-translational ER import the Sec61 complex associates with the Sec62/63 complex to form the Sec complex. SSH1 is a component of the heterotrimeric Ssh1 complex, which is composed of SSH1, SBH2 and SSS1. SSS1 interacts with OST1, OST4, SWP1 and WBP1, components of the OT complex.

Its subcellular location is the endoplasmic reticulum membrane. Part of the Sec61 complex, which is the major component of channel-forming translocon complex that mediates protein translocation across the endoplasmic reticulum (ER). The functional states of the translocon complex include co- and post-translational ER import, cotranslational membrane protein integration and retrograde transport of misfolded proteins out of the ER. In the cotranslational pathway, ribosomes synthesizing presecretory proteins are targeted to the translocon by the cytosolic signal recognition particle (SRP) and its ER-localized receptor. The association of the Sec61 complex with the ribosome is mediated by the 28S rRNA of the large ribosomal subunit. SRP-independent post-translational translocation requires the association of additional factors, such as the Sec62/63 complex and KAR2. Also part of the Ssh1 complex, which probably is the major component of a channel-forming translocon complex that may function exclusively in the cotranslational pathway of protein ER import. The polypeptide is Protein transport protein SSS1 (SSS1) (Saccharomyces cerevisiae (strain ATCC 204508 / S288c) (Baker's yeast)).